Reading from the N-terminus, the 372-residue chain is Aminomethyltransferase (372 aa).

This sequence belongs to the GcvT family. As to quaternary structure, the glycine cleavage system is composed of four proteins: P, T, L and H.

The catalysed reaction is N(6)-[(R)-S(8)-aminomethyldihydrolipoyl]-L-lysyl-[protein] + (6S)-5,6,7,8-tetrahydrofolate = N(6)-[(R)-dihydrolipoyl]-L-lysyl-[protein] + (6R)-5,10-methylene-5,6,7,8-tetrahydrofolate + NH4(+). Its function is as follows. The glycine cleavage system catalyzes the degradation of glycine. The chain is Aminomethyltransferase from Burkholderia mallei (strain NCTC 10247).